A 434-amino-acid chain; its full sequence is 3-phosphoshikimate 1-carboxyvinyltransferase (434 aa).

3 residues coordinate 3-phosphoshikimate: Lys-15, Ser-16, and Arg-20. Lys-15 is a phosphoenolpyruvate binding site. Phosphoenolpyruvate is bound by residues Gly-96 and Arg-124. Residues Ser-169, Gln-171, Ser-195, Asp-319, and Lys-346 each coordinate 3-phosphoshikimate. Gln-171 contributes to the phosphoenolpyruvate binding site. Catalysis depends on Asp-319, which acts as the Proton acceptor. Positions 350 and 394 each coordinate phosphoenolpyruvate.

It belongs to the EPSP synthase family. Monomer.

It localises to the cytoplasm. The catalysed reaction is 3-phosphoshikimate + phosphoenolpyruvate = 5-O-(1-carboxyvinyl)-3-phosphoshikimate + phosphate. The protein operates within metabolic intermediate biosynthesis; chorismate biosynthesis; chorismate from D-erythrose 4-phosphate and phosphoenolpyruvate: step 6/7. Its function is as follows. Catalyzes the transfer of the enolpyruvyl moiety of phosphoenolpyruvate (PEP) to the 5-hydroxyl of shikimate-3-phosphate (S3P) to produce enolpyruvyl shikimate-3-phosphate and inorganic phosphate. The protein is 3-phosphoshikimate 1-carboxyvinyltransferase of Chlorobium phaeobacteroides (strain DSM 266 / SMG 266 / 2430).